Here is a 114-residue protein sequence, read N- to C-terminus: Large ribosomal subunit protein uL22 (114 aa).

This sequence belongs to the universal ribosomal protein uL22 family. In terms of assembly, part of the 50S ribosomal subunit.

Functionally, this protein binds specifically to 23S rRNA; its binding is stimulated by other ribosomal proteins, e.g. L4, L17, and L20. It is important during the early stages of 50S assembly. It makes multiple contacts with different domains of the 23S rRNA in the assembled 50S subunit and ribosome. Its function is as follows. The globular domain of the protein is located near the polypeptide exit tunnel on the outside of the subunit, while an extended beta-hairpin is found that lines the wall of the exit tunnel in the center of the 70S ribosome. This is Large ribosomal subunit protein uL22 from Streptococcus pyogenes serotype M5 (strain Manfredo).